Consider the following 233-residue polypeptide: 5'-methylthioadenosine/S-adenosylhomocysteine nucleosidase (233 aa).

Glu12 serves as the catalytic Proton acceptor. Substrate-binding positions include Gly78, Ile156, and 177 to 178 (ME). Asp201 functions as the Proton donor in the catalytic mechanism.

Belongs to the PNP/UDP phosphorylase family. MtnN subfamily.

It catalyses the reaction S-adenosyl-L-homocysteine + H2O = S-(5-deoxy-D-ribos-5-yl)-L-homocysteine + adenine. It carries out the reaction S-methyl-5'-thioadenosine + H2O = 5-(methylsulfanyl)-D-ribose + adenine. The enzyme catalyses 5'-deoxyadenosine + H2O = 5-deoxy-D-ribose + adenine. It participates in amino-acid biosynthesis; L-methionine biosynthesis via salvage pathway; S-methyl-5-thio-alpha-D-ribose 1-phosphate from S-methyl-5'-thioadenosine (hydrolase route): step 1/2. Its function is as follows. Catalyzes the irreversible cleavage of the glycosidic bond in both 5'-methylthioadenosine (MTA) and S-adenosylhomocysteine (SAH/AdoHcy) to adenine and the corresponding thioribose, 5'-methylthioribose and S-ribosylhomocysteine, respectively. Also cleaves 5'-deoxyadenosine, a toxic by-product of radical S-adenosylmethionine (SAM) enzymes, into 5-deoxyribose and adenine. This chain is 5'-methylthioadenosine/S-adenosylhomocysteine nucleosidase, found in Listeria monocytogenes serotype 4b (strain F2365).